Reading from the N-terminus, the 340-residue chain is S-adenosylmethionine:tRNA ribosyltransferase-isomerase (340 aa).

It belongs to the QueA family. Monomer.

It localises to the cytoplasm. It carries out the reaction 7-aminomethyl-7-carbaguanosine(34) in tRNA + S-adenosyl-L-methionine = epoxyqueuosine(34) in tRNA + adenine + L-methionine + 2 H(+). It participates in tRNA modification; tRNA-queuosine biosynthesis. Transfers and isomerizes the ribose moiety from AdoMet to the 7-aminomethyl group of 7-deazaguanine (preQ1-tRNA) to give epoxyqueuosine (oQ-tRNA). This chain is S-adenosylmethionine:tRNA ribosyltransferase-isomerase, found in Vesicomyosocius okutanii subsp. Calyptogena okutanii (strain HA).